We begin with the raw amino-acid sequence, 647 residues long: Knirps-related protein (647 aa).

The nuclear receptor DNA-binding region spans 11-87; the sequence is NQTCKVCGEP…VGMSKSGSRY (77 aa). 2 NR C4-type zinc fingers span residues 14–34 and 51–75; these read CKVC…CEGC and CKNN…LKKC. Disordered stretches follow at residues 111 to 142, 196 to 274, 340 to 383, and 402 to 600; these read MAAH…KGMS, HKHP…LSPF, GAGQ…LLTN, and SQQQ…NSIL. The span at 120 to 134 shows a compositional bias: gly residues; sequence AGGGSSGGSGGGQGM. 2 stretches are compositionally biased toward low complexity: residues 200–223 and 232–247; these read VVAS…VSSV and GGKS…ADGS. The span at 248–260 shows a compositional bias: gly residues; it reads HSGGGGGGGGGVT. Polar residues-rich tracts occupy residues 370 to 381 and 420 to 432; these read SPSTHANNNHLL and DYSI…PNSE. 2 stretches are compositionally biased toward basic and acidic residues: residues 433–443 and 480–491; these read SGRERVKSRQN and QEERTPAGEDPR. Over residues 502–519 the composition is skewed to low complexity; the sequence is LSMKTTGSSLSSKSSSPE. A compositionally biased stretch (acidic residues) spans 520–541; the sequence is IEPETEISSDVEKNDTDDDDED. The span at 542 to 556 shows a compositional bias: basic and acidic residues; it reads LKVTPEEEISVRETA. Over residues 567-579 the composition is skewed to polar residues; that stretch reads TTETAKTSIENTH. Over residues 580-599 the composition is skewed to low complexity; sequence NNNNSISNNNNNNNNNNNSI.

The protein belongs to the nuclear hormone receptor family. NR0 subfamily.

The protein localises to the nucleus. The sequence is that of Knirps-related protein (knrl) from Drosophila melanogaster (Fruit fly).